A 162-amino-acid chain; its full sequence is NADPH-dependent 7-cyano-7-deazaguanine reductase (162 aa).

Cys53 serves as the catalytic Thioimide intermediate. Residue Asp60 is the Proton donor of the active site. Residues 75–77 (VES) and 94–95 (HE) contribute to the substrate site.

The protein belongs to the GTP cyclohydrolase I family. QueF type 1 subfamily.

The protein localises to the cytoplasm. The enzyme catalyses 7-aminomethyl-7-carbaguanine + 2 NADP(+) = 7-cyano-7-deazaguanine + 2 NADPH + 3 H(+). It participates in tRNA modification; tRNA-queuosine biosynthesis. Catalyzes the NADPH-dependent reduction of 7-cyano-7-deazaguanine (preQ0) to 7-aminomethyl-7-deazaguanine (preQ1). This chain is NADPH-dependent 7-cyano-7-deazaguanine reductase, found in Exiguobacterium sp. (strain ATCC BAA-1283 / AT1b).